A 240-amino-acid polypeptide reads, in one-letter code: MLLQSQTMGVSHSFTPKGITIPQREKPGHMYQNEDYLQNGLPTETTVLGTVQILCCLLISSLGAILVFAPYPSHFNPAISTTLMSGYPFLGALCFGITGSLSIISGKQSTKPFDLSSLTSNAVSSVTAGAGLFLLADSMVALRTASQHCGSEMDYLSSLPYSEYYYPIYEIKDCLLTSVSLTGVLVVMLIFTVLELLLAAYSSVFWWKQLYSNNPGSSFSSTQSQDHIQQVKKSSSRSWI.

Residues 1-47 (MLLQSQTMGVSHSFTPKGITIPQREKPGHMYQNEDYLQNGLPTETTV) are Cytoplasmic-facing. A helical transmembrane segment spans residues 48 to 68 (LGTVQILCCLLISSLGAILVF). Residues 69–83 (APYPSHFNPAISTTL) are Extracellular-facing. The chain crosses the membrane as a helical span at residues 84–104 (MSGYPFLGALCFGITGSLSII). Residues 105–121 (SGKQSTKPFDLSSLTSN) are Cytoplasmic-facing. A helical transmembrane segment spans residues 122-142 (AVSSVTAGAGLFLLADSMVAL). Residues 143 to 178 (RTASQHCGSEMDYLSSLPYSEYYYPIYEIKDCLLTS) lie on the Extracellular side of the membrane. Residues 179–199 (VSLTGVLVVMLIFTVLELLLA) form a helical membrane-spanning segment. Residues 200 to 240 (AYSSVFWWKQLYSNNPGSSFSSTQSQDHIQQVKKSSSRSWI) are Cytoplasmic-facing. A disordered region spans residues 218-240 (SFSSTQSQDHIQQVKKSSSRSWI).

It belongs to the MS4A family. As to expression, ubiquitous expression in normal tissues. Expression is more elevated in adult liver, lung, spleen, and heart than in their fetal counterparts, and is higher in normal tissues than in the cancerous tissue or cell lines. Low levels of expression were detected in the promonocytic stage, whereas high levels of expression were detected in mature monocytes.

It localises to the membrane. Its function is as follows. May be involved in signal transduction as a component of a multimeric receptor complex. This is Membrane-spanning 4-domains subfamily A member 7 (MS4A7) from Homo sapiens (Human).